Consider the following 314-residue polypeptide: Inactive protein FRIGIDA (314 aa).

A compositionally biased stretch (low complexity) spans 1 to 18 (MSNYPPTVAAQPTTTANP). A disordered region spans residues 1-31 (MSNYPPTVAAQPTTTANPLLQRHQSEQRRRE). The stretch at 67–97 (VAVETFKRQFDDLQKHIESIENAIDSKLESN) forms a coiled coil.

The protein belongs to the Frigida family.

The protein localises to the nucleus. The polypeptide is Inactive protein FRIGIDA (FRI) (Arabidopsis thaliana (Mouse-ear cress)).